The chain runs to 492 residues: Proline--tRNA ligase (492 aa).

The protein belongs to the class-II aminoacyl-tRNA synthetase family. ProS type 3 subfamily. Homodimer.

The protein resides in the cytoplasm. The enzyme catalyses tRNA(Pro) + L-proline + ATP = L-prolyl-tRNA(Pro) + AMP + diphosphate. Catalyzes the attachment of proline to tRNA(Pro) in a two-step reaction: proline is first activated by ATP to form Pro-AMP and then transferred to the acceptor end of tRNA(Pro). The protein is Proline--tRNA ligase of Flavobacterium psychrophilum (strain ATCC 49511 / DSM 21280 / CIP 103535 / JIP02/86).